The sequence spans 326 residues: Cinnamoyl-CoA reductase CAD2 (326 aa).

Residues 14-20, Arg-39, Lys-46, 66-67, and 86-88 contribute to the NADP(+) site; these read GASGYIA, NL, and TAS. (E)-coniferaldehyde-binding residues include Ser-130, Tyr-136, Arg-141, and Tyr-165. NADP(+) contacts are provided by residues Tyr-165, Lys-169, 192-195, and Ser-207; that span reads PAMV. The active-site Proton donor is Lys-169. Positions 194, 207, 226, 257, and 290 each coordinate (E)-coniferaldehyde.

It belongs to the NAD(P)-dependent epimerase/dehydratase family. Dihydroflavonol-4-reductase subfamily.

It localises to the cytoplasm. It carries out the reaction (E)-cinnamaldehyde + NADP(+) + CoA = (E)-cinnamoyl-CoA + NADPH + H(+). It catalyses the reaction (E)-coniferaldehyde + NADP(+) + CoA = (E)-feruloyl-CoA + NADPH + H(+). The catalysed reaction is (E)-4-coumaraldehyde + NADP(+) + CoA = (E)-4-coumaroyl-CoA + NADPH + H(+). It functions in the pathway aromatic compound metabolism; phenylpropanoid biosynthesis. Functionally, involved in lignin biosynthesis. Regulates the monolignol composition by catalyzing the conversion of cinnamoyl-CoAs into their corresponding cinnamaldehydes. Can use coumaraldehyde and coniferaldehyde as substrates, but barely sinapaldehyde. The protein is Cinnamoyl-CoA reductase CAD2 of Medicago truncatula (Barrel medic).